The sequence spans 374 residues: tRNA (guanine(26)-N(2))-dimethyltransferase (374 aa).

The Trm1 methyltransferase domain maps to 1–367 (MILKEGEVVF…ATLKNVIEAI (367 aa)). The S-adenosyl-L-methionine site is built by Arg-34, Arg-66, Asp-86, Asp-113, and Ala-114.

This sequence belongs to the class I-like SAM-binding methyltransferase superfamily. Trm1 family.

It catalyses the reaction guanosine(26) in tRNA + 2 S-adenosyl-L-methionine = N(2)-dimethylguanosine(26) in tRNA + 2 S-adenosyl-L-homocysteine + 2 H(+). Its function is as follows. Dimethylates a single guanine residue at position 26 of a number of tRNAs using S-adenosyl-L-methionine as donor of the methyl groups. The chain is tRNA (guanine(26)-N(2))-dimethyltransferase from Methanocaldococcus jannaschii (strain ATCC 43067 / DSM 2661 / JAL-1 / JCM 10045 / NBRC 100440) (Methanococcus jannaschii).